A 464-amino-acid chain; its full sequence is Fumarate hydratase class II (464 aa).

Residues 100–102, 131–134, 141–143, and T189 contribute to the substrate site; these read SGT, HPND, and SSN. Catalysis depends on H190, which acts as the Proton donor/acceptor. S320 is a catalytic residue. Substrate contacts are provided by residues S321 and 326–328; that span reads KVN.

This sequence belongs to the class-II fumarase/aspartase family. Fumarase subfamily. In terms of assembly, homotetramer.

The protein resides in the cytoplasm. The catalysed reaction is (S)-malate = fumarate + H2O. The protein operates within carbohydrate metabolism; tricarboxylic acid cycle; (S)-malate from fumarate: step 1/1. Its function is as follows. Involved in the TCA cycle. Catalyzes the stereospecific interconversion of fumarate to L-malate. The protein is Fumarate hydratase class II of Deinococcus radiodurans (strain ATCC 13939 / DSM 20539 / JCM 16871 / CCUG 27074 / LMG 4051 / NBRC 15346 / NCIMB 9279 / VKM B-1422 / R1).